A 266-amino-acid chain; its full sequence is GTP-binding protein Rhes (266 aa).

A GTP-binding site is contributed by 26-33 (GASRVGKS). Residues 48-56 (YTPTIEDFH) carry the Effector region motif. Residues 73 to 77 (DTSGN) and 140 to 143 (NKND) contribute to the GTP site. Positions 189 to 235 (MAKLPHEMSPALHHKISVQYGDAFHPRPFCMRRTKVAGAYGMVSPFA) are interaction with GNB1, GNB2 and GNB3. Cys-263 is subject to Cysteine methyl ester. Residue Cys-263 is the site of S-farnesyl cysteine attachment. Residues 264–266 (SIQ) constitute a propeptide, removed in mature form.

The protein belongs to the small GTPase superfamily. RasD family. As to quaternary structure, monomer (Potential). Interacts with PIK3CA and UBE2I. Interacts with GNB1, GNB2 and GNB3. Farnesylated. Farnesylation is required for membrane targeting. Highly expressed in brain; prominently in the striatum and weakly in kidney, thyroid, lung, heart and testis. Not expressed in liver. Expressed in pancreatic cell lines and in a embryonic stem cell line.

It is found in the cell membrane. GTPase signaling protein that binds to and hydrolyzes GTP. Regulates signaling pathways involving G-proteins-coupled receptor and heterotrimeric proteins such as GNB1, GNB2 and GNB3. May be involved in selected striatal competencies, mainly locomotor activity and motor coordination. This Mus musculus (Mouse) protein is GTP-binding protein Rhes (Rasd2).